The following is a 744-amino-acid chain: Adenosylcobalamin-dependent ribonucleoside-triphosphate reductase (744 aa).

The cysteines at positions 120 and 424 are disulfide-linked. Residues 148–159 (SMPFSFLFDQLM) are effector region-1. The tract at residues 169-318 (VDENINQIPK…ICNLIGKTVV (150 aa)) is effector region-2. Residues C413 and E415 contribute to the active site. The interval 570–631 (FHYSGYLIQR…SDNFASAGTV (62 aa)) is adenosylcobalamin-binding-1. An adenosylcobalamin-binding-2 region spans residues 690–729 (LKQAPKEPISKEKYEKADNHITGNVEIVFEQTNEDQKGLE).

This sequence belongs to the class II ribonucleoside-triphosphate reductase family. As to quaternary structure, monomer. Requires adenosylcob(III)alamin as cofactor.

It catalyses the reaction a 2'-deoxyribonucleoside 5'-triphosphate + [thioredoxin]-disulfide + H2O = a ribonucleoside 5'-triphosphate + [thioredoxin]-dithiol. Its activity is regulated as follows. Allosterically regulated by ATP and dNTP. This is Adenosylcobalamin-dependent ribonucleoside-triphosphate reductase (rtpR) from Lactobacillus gasseri (strain ATCC 33323 / DSM 20243 / BCRC 14619 / CIP 102991 / JCM 1131 / KCTC 3163 / NCIMB 11718 / NCTC 13722 / AM63).